Here is a 442-residue protein sequence, read N- to C-terminus: Thymidine phosphorylase (442 aa).

This sequence belongs to the thymidine/pyrimidine-nucleoside phosphorylase family. Homodimer.

The enzyme catalyses thymidine + phosphate = 2-deoxy-alpha-D-ribose 1-phosphate + thymine. It participates in pyrimidine metabolism; dTMP biosynthesis via salvage pathway; dTMP from thymine: step 1/2. The enzymes which catalyze the reversible phosphorolysis of pyrimidine nucleosides are involved in the degradation of these compounds and in their utilization as carbon and energy sources, or in the rescue of pyrimidine bases for nucleotide synthesis. In Vibrio parahaemolyticus serotype O3:K6 (strain RIMD 2210633), this protein is Thymidine phosphorylase.